We begin with the raw amino-acid sequence, 197 residues long: Pyridoxal 5'-phosphate synthase subunit PdxT (197 aa).

52-54 (GES) lines the L-glutamine pocket. C83 (nucleophile) is an active-site residue. L-glutamine contacts are provided by residues R115 and 142–143 (IR). Active-site charge relay system residues include H178 and E180.

This sequence belongs to the glutaminase PdxT/SNO family. In terms of assembly, in the presence of PdxS, forms a dodecamer of heterodimers. Only shows activity in the heterodimer.

The catalysed reaction is aldehydo-D-ribose 5-phosphate + D-glyceraldehyde 3-phosphate + L-glutamine = pyridoxal 5'-phosphate + L-glutamate + phosphate + 3 H2O + H(+). It carries out the reaction L-glutamine + H2O = L-glutamate + NH4(+). Its pathway is cofactor biosynthesis; pyridoxal 5'-phosphate biosynthesis. Catalyzes the hydrolysis of glutamine to glutamate and ammonia as part of the biosynthesis of pyridoxal 5'-phosphate. The resulting ammonia molecule is channeled to the active site of PdxS. This Korarchaeum cryptofilum (strain OPF8) protein is Pyridoxal 5'-phosphate synthase subunit PdxT.